The chain runs to 88 residues: Cell division topological specificity factor (88 aa).

This sequence belongs to the MinE family.

Functionally, prevents the cell division inhibition by proteins MinC and MinD at internal division sites while permitting inhibition at polar sites. This ensures cell division at the proper site by restricting the formation of a division septum at the midpoint of the long axis of the cell. The chain is Cell division topological specificity factor from Herminiimonas arsenicoxydans.